An 88-amino-acid chain; its full sequence is Cytochrome c6 (88 aa).

The heme c site is built by Cys15, Cys18, His19, and Met61.

Belongs to the cytochrome c family. PetJ subfamily. As to quaternary structure, monomer. In terms of processing, binds 1 heme c group covalently per subunit.

The protein localises to the plastid. It localises to the chloroplast thylakoid lumen. In terms of biological role, functions as an electron carrier between membrane-bound cytochrome b6-f and photosystem I in oxygenic photosynthesis. The protein is Cytochrome c6 (petJ) of Bryopsis maxima (Green alga).